The primary structure comprises 500 residues: Lysine--tRNA ligase (500 aa).

Residues glutamate 410 and glutamate 417 each coordinate Mg(2+).

It belongs to the class-II aminoacyl-tRNA synthetase family. As to quaternary structure, homodimer. Mg(2+) serves as cofactor.

The protein localises to the cytoplasm. The catalysed reaction is tRNA(Lys) + L-lysine + ATP = L-lysyl-tRNA(Lys) + AMP + diphosphate. The sequence is that of Lysine--tRNA ligase from Pseudomonas syringae pv. syringae (strain B728a).